The sequence spans 404 residues: Probable tRNA sulfurtransferase (404 aa).

In terms of domain architecture, THUMP spans 60-165 (QPIVEALKLV…DEAAYISYEE (106 aa)). Residues 183-184 (ML), 208-209 (HF), Arg265, Gly287, and Gln296 each bind ATP.

It belongs to the ThiI family.

The protein localises to the cytoplasm. It carries out the reaction [ThiI sulfur-carrier protein]-S-sulfanyl-L-cysteine + a uridine in tRNA + 2 reduced [2Fe-2S]-[ferredoxin] + ATP + H(+) = [ThiI sulfur-carrier protein]-L-cysteine + a 4-thiouridine in tRNA + 2 oxidized [2Fe-2S]-[ferredoxin] + AMP + diphosphate. The enzyme catalyses [ThiS sulfur-carrier protein]-C-terminal Gly-Gly-AMP + S-sulfanyl-L-cysteinyl-[cysteine desulfurase] + AH2 = [ThiS sulfur-carrier protein]-C-terminal-Gly-aminoethanethioate + L-cysteinyl-[cysteine desulfurase] + A + AMP + 2 H(+). Its pathway is cofactor biosynthesis; thiamine diphosphate biosynthesis. Functionally, catalyzes the ATP-dependent transfer of a sulfur to tRNA to produce 4-thiouridine in position 8 of tRNAs, which functions as a near-UV photosensor. Also catalyzes the transfer of sulfur to the sulfur carrier protein ThiS, forming ThiS-thiocarboxylate. This is a step in the synthesis of thiazole, in the thiamine biosynthesis pathway. The sulfur is donated as persulfide by IscS. In Streptococcus pyogenes serotype M12 (strain MGAS2096), this protein is Probable tRNA sulfurtransferase.